Reading from the N-terminus, the 278-residue chain is Shikimate dehydrogenase (NADP(+)) (278 aa).

Residues 19-21 (SRS) and T66 each bind shikimate. K70 serves as the catalytic Proton acceptor. Shikimate contacts are provided by N91 and D106. NADP(+)-binding positions include 129–133 (GAGGA) and F221. Y223 is a shikimate binding site. G242 contributes to the NADP(+) binding site.

It belongs to the shikimate dehydrogenase family. In terms of assembly, homodimer.

The catalysed reaction is shikimate + NADP(+) = 3-dehydroshikimate + NADPH + H(+). The protein operates within metabolic intermediate biosynthesis; chorismate biosynthesis; chorismate from D-erythrose 4-phosphate and phosphoenolpyruvate: step 4/7. In terms of biological role, involved in the biosynthesis of the chorismate, which leads to the biosynthesis of aromatic amino acids. Catalyzes the reversible NADPH linked reduction of 3-dehydroshikimate (DHSA) to yield shikimate (SA). The protein is Shikimate dehydrogenase (NADP(+)) of Anaeromyxobacter dehalogenans (strain 2CP-1 / ATCC BAA-258).